The chain runs to 503 residues: Palmitoleoyl-protein carboxylesterase NOTUM (503 aa).

The N-terminal stretch at 1–19 (MGGEVRVLLLLGLLHWVGG) is a signal peptide. The segment at 23–53 (RKTWRRRGQQPPQPPPPPPLPQRAEVEPGAG) is disordered. Over residues 33–43 (PPQPPPPPPLP) the composition is skewed to pro residues. Ser-88 is modified (phosphoserine). Residue Asn-103 is glycosylated (N-linked (GlcNAc...) asparagine). Residues Ser-239, Asp-347, and His-396 each act as charge relay system in the active site.

This sequence belongs to the pectinacetylesterase family. Notum subfamily. As to expression, widely expressed. Expressed in lung, ovary, kidney, liver and brain. Not detected in thymus, heart, spleen, stomach, skeletal muscle and bone marrow.

Its subcellular location is the secreted. It carries out the reaction [Wnt protein]-O-(9Z)-hexadecenoyl-L-serine + H2O = [Wnt protein]-L-serine + (9Z)-hexadecenoate + H(+). In terms of biological role, carboxylesterase that acts as a key negative regulator of the Wnt signaling pathway by specifically mediating depalmitoleoylation of WNT proteins. Serine palmitoleoylation of WNT proteins is required for efficient binding to frizzled receptors. The polypeptide is Palmitoleoyl-protein carboxylesterase NOTUM (Mus musculus (Mouse)).